Reading from the N-terminus, the 860-residue chain is Leucine--tRNA ligase (860 aa).

Residues 42 to 52 (PYPSGRLHMGH) carry the 'HIGH' region motif. A 'KMSKS' region motif is present at residues 619 to 623 (KMSKS). Lysine 622 is an ATP binding site.

Belongs to the class-I aminoacyl-tRNA synthetase family.

It is found in the cytoplasm. The enzyme catalyses tRNA(Leu) + L-leucine + ATP = L-leucyl-tRNA(Leu) + AMP + diphosphate. The protein is Leucine--tRNA ligase of Pectobacterium carotovorum subsp. carotovorum (strain PC1).